Consider the following 130-residue polypeptide: Metastasis-suppressor KiSS-1 (130 aa).

The N-terminal stretch at 1-19 (MISMASWQLLLLLCVATYG) is a signal peptide. The interval 49–82 (KESRYAESKPGSAGLRARRSSPCPPVEGPAGRQR) is disordered. A disulfide bridge connects residues cysteine 71 and cysteine 85. Tyrosine 110 is modified (phosphotyrosine). The segment at 110–119 (YNWNSFGLRY) is essential for receptor binding and receptor activation. Residue tyrosine 119 is modified to Tyrosine amide.

This sequence belongs to the KISS1 family. Weak in all tissue types with highest levels in lung and 15- 17-day embryos. Expressed in areas of the hypothalamus implicated in the neuroendocrine regulation of gonadotropin secretion, including the anteroventral periventricular nucleus, the periventricular nucleus, and the arcuate nucleus.

It is found in the secreted. Metastasis suppressor protein. May regulate events downstream of cell-matrix adhesion, perhaps involving cytoskeletal reorganization. Generates a C-terminally amidated peptide, metastin which functions as the endogenous ligand of the G-protein coupled receptor GPR54. Activation of the receptor inhibits cell proliferation and cell migration, key characteristics of tumor metastasis. The receptor is also essential for normal gonadotropin-released hormone physiology and for puberty. The hypothalamic KiSS1/GPR54 system is a pivotal factor in central regulation of the gonadotropic axis at puberty and in adulthood. Intracerebroventricular administration induces an increase in serum LH and FSH levels in prepubertal male and female as well as in adult animals. The chain is Metastasis-suppressor KiSS-1 (Kiss1) from Mus musculus (Mouse).